The following is a 184-amino-acid chain: Ribosome-recycling factor (184 aa).

The protein belongs to the RRF family.

It localises to the cytoplasm. Functionally, responsible for the release of ribosomes from messenger RNA at the termination of protein biosynthesis. May increase the efficiency of translation by recycling ribosomes from one round of translation to another. In Mycoplasma pneumoniae (strain ATCC 29342 / M129 / Subtype 1) (Mycoplasmoides pneumoniae), this protein is Ribosome-recycling factor.